A 270-amino-acid polypeptide reads, in one-letter code: uncharacterized protein (270 aa).

The N-terminal stretch at 1-22 (MEYIKKIALYMSVLLLIIFIGG) is a signal peptide. C23 is lipidated: N-palmitoyl cysteine. C23 is lipidated: S-diacylglycerol cysteine.

The protein belongs to the staphylococcal tandem lipoprotein family.

It is found in the cell membrane. This is an uncharacterized protein from Staphylococcus aureus (strain MW2).